A 445-amino-acid chain; its full sequence is Lateral flagellar hook-associated protein 2 (445 aa).

A coiled-coil region spans residues 388–423 (SGAFKSRKEALQANLDRLSDKQTTLERKYDMSYKRY).

Belongs to the FliD family. As to quaternary structure, homopentamer.

Its subcellular location is the secreted. It localises to the bacterial flagellum. Required for the morphogenesis and for the elongation of the flagellar filament by facilitating polymerization of the flagellin monomers at the tip of growing filament. Forms a capping structure, which prevents flagellin subunits (transported through the central channel of the flagellum) from leaking out without polymerization at the distal end. Essential for swarming motility. The sequence is that of Lateral flagellar hook-associated protein 2 (fliDL) from Vibrio parahaemolyticus serotype O3:K6 (strain RIMD 2210633).